A 113-amino-acid polypeptide reads, in one-letter code: DNA-directed RNA polymerase subunit Rpo4 (113 aa).

Belongs to the eukaryotic RPB4 RNA polymerase subunit family. In terms of assembly, part of the 13-subunit RNA polymerase complex. Forms a stalk with Rpo7 that extends from the main structure.

Its subcellular location is the cytoplasm. It carries out the reaction RNA(n) + a ribonucleoside 5'-triphosphate = RNA(n+1) + diphosphate. Functionally, DNA-dependent RNA polymerase (RNAP) catalyzes the transcription of DNA into RNA using the four ribonucleoside triphosphates as substrates. This subunit is less well bound than the others. The sequence is that of DNA-directed RNA polymerase subunit Rpo4 from Saccharolobus solfataricus (strain ATCC 35092 / DSM 1617 / JCM 11322 / P2) (Sulfolobus solfataricus).